A 306-amino-acid polypeptide reads, in one-letter code: Protein STPG3 (306 aa).

A disordered region spans residues 210–230 (CSYTPLLPTSKPSGEKRPSPN).

This chain is Protein STPG3, found in Mus musculus (Mouse).